A 465-amino-acid polypeptide reads, in one-letter code: MSHLAISELLKGKVSVDSQVTVKGWIRTRRDSKAGISFLAVHDGSCFDPIQAVVPNSLNNYDEVTSLTAGCSVSVTGVLVQSAGQGQSYEIQANSVTVLGWVENPDSYPMAAKRHSIEYLREHAHLRPRTNMIGAVTRVRNCLAQAIHRFYHEQGFLWISTPIITASDCEGAGEMFRVSTLDMQNLPLTDKGEVDYSEDFFGKEAFLTVSGQLNGETYASAMSKIYTFGPTFRAENSNTSRHLAEFWMVEPELAFADLEDIAKLAEQMLKYVFKAVLEERRDDMEFFAQRVEKTAITRLEEFVEKDFAQVDYTEAVEILKACGKKFEYAVEWGVDLQSEHERYLAEEHFKAPVVIKNYPRDIKAFYMRQNEDGKTVAAMDIVAPGIGEIIGGSQREERLDILDARLDEMGLNKDDYSWYRDLRKYGTVPHSGFGLGFERLVAYVTGMGNVRDVIAFPRTKGSATY.

Belongs to the class-II aminoacyl-tRNA synthetase family. Homodimer.

It is found in the cytoplasm. It carries out the reaction tRNA(Asn) + L-asparagine + ATP = L-asparaginyl-tRNA(Asn) + AMP + diphosphate + H(+). In Pseudoalteromonas translucida (strain TAC 125), this protein is Asparagine--tRNA ligase.